Here is a 61-residue protein sequence, read N- to C-terminus: Small ribosomal subunit protein uS14 (61 aa).

Zn(2+)-binding residues include C24, C27, C40, and C43.

It belongs to the universal ribosomal protein uS14 family. Zinc-binding uS14 subfamily. In terms of assembly, part of the 30S ribosomal subunit. Contacts proteins S3 and S10. Zn(2+) serves as cofactor.

Its function is as follows. Binds 16S rRNA, required for the assembly of 30S particles and may also be responsible for determining the conformation of the 16S rRNA at the A site. The polypeptide is Small ribosomal subunit protein uS14 (Nitratidesulfovibrio vulgaris (strain ATCC 29579 / DSM 644 / CCUG 34227 / NCIMB 8303 / VKM B-1760 / Hildenborough) (Desulfovibrio vulgaris)).